The primary structure comprises 477 residues: uncharacterized protein (477 aa).

This is an uncharacterized protein from Aquifex aeolicus (strain VF5).